The chain runs to 154 residues: uncharacterized protein (154 aa).

3 consecutive transmembrane segments (helical) span residues 26 to 48 (VSGW…GVVT), 97 to 119 (IAMF…LIVF), and 132 to 150 (GLYT…YCAW).

It localises to the cell membrane. This is an uncharacterized protein from Archaeoglobus fulgidus (strain ATCC 49558 / DSM 4304 / JCM 9628 / NBRC 100126 / VC-16).